An 86-amino-acid polypeptide reads, in one-letter code: Cytochrome c oxidase subunit 6B1 (86 aa).

Residue Ala-2 is modified to N-acetylalanine. The CHCH domain maps to 27 to 73; sequence TRNCWQNYLDFHRCQKAMTAKGGDISVCEWYQRVYQSLCPTSWVTDW. The Cx9C motif signature appears at 30–40; sequence CWQNYLDFHRC. Cystine bridges form between Cys-30/Cys-65 and Cys-40/Cys-54. A Cx10C motif motif is present at residues 54–65; the sequence is CEWYQRVYQSLC.

This sequence belongs to the cytochrome c oxidase subunit 6B family. In terms of assembly, component of the cytochrome c oxidase (complex IV, CIV), a multisubunit enzyme composed of 14 subunits. The complex is composed of a catalytic core of 3 subunits MT-CO1, MT-CO2 and MT-CO3, encoded in the mitochondrial DNA, and 11 supernumerary subunits COX4I1 (or COX4I2), COX5A, COX5B, COX6A1 (or COX6A2), COX6B1 (or COX6B2), COX6C, COX7A2 (or COX7A1), COX7B, COX7C, COX8A and NDUFA4, which are encoded in the nuclear genome. The complex exists as a monomer or a dimer and forms supercomplexes (SCs) in the inner mitochondrial membrane with NADH-ubiquinone oxidoreductase (complex I, CI) and ubiquinol-cytochrome c oxidoreductase (cytochrome b-c1 complex, complex III, CIII), resulting in different assemblies (supercomplex SCI(1)III(2)IV(1) and megacomplex MCI(2)III(2)IV(2)).

The protein localises to the mitochondrion inner membrane. It participates in energy metabolism; oxidative phosphorylation. Functionally, component of the cytochrome c oxidase, the last enzyme in the mitochondrial electron transport chain which drives oxidative phosphorylation. The respiratory chain contains 3 multisubunit complexes succinate dehydrogenase (complex II, CII), ubiquinol-cytochrome c oxidoreductase (cytochrome b-c1 complex, complex III, CIII) and cytochrome c oxidase (complex IV, CIV), that cooperate to transfer electrons derived from NADH and succinate to molecular oxygen, creating an electrochemical gradient over the inner membrane that drives transmembrane transport and the ATP synthase. Cytochrome c oxidase is the component of the respiratory chain that catalyzes the reduction of oxygen to water. Electrons originating from reduced cytochrome c in the intermembrane space (IMS) are transferred via the dinuclear copper A center (CU(A)) of subunit 2 and heme A of subunit 1 to the active site in subunit 1, a binuclear center (BNC) formed by heme A3 and copper B (CU(B)). The BNC reduces molecular oxygen to 2 water molecules using 4 electrons from cytochrome c in the IMS and 4 protons from the mitochondrial matrix. The protein is Cytochrome c oxidase subunit 6B1 (COX6B1) of Homo sapiens (Human).